A 55-amino-acid chain; its full sequence is Large ribosomal subunit protein bL33 (55 aa).

Belongs to the bacterial ribosomal protein bL33 family.

In Maricaulis maris (strain MCS10) (Caulobacter maris), this protein is Large ribosomal subunit protein bL33.